The sequence spans 79 residues: Large ribosomal subunit protein bL31 (79 aa).

Belongs to the bacterial ribosomal protein bL31 family. Type A subfamily. In terms of assembly, part of the 50S ribosomal subunit.

Functionally, binds the 23S rRNA. This Nostoc sp. (strain PCC 7120 / SAG 25.82 / UTEX 2576) protein is Large ribosomal subunit protein bL31.